The primary structure comprises 186 residues: MKLLLLCLGLILVCAHEEENVVRSNIDISKISGEWYSILLASDVKEKIEENGSMRVFVEHIKALDNSSLSFVFHTKENGKCTEIFLVADKTKDGVYTVVYDGYNVFSIVETVYDEYILLHLLNFDKTRPFQLVEFYAREPDVSQKLKEKFVKYCQEHGIVNILDLTEVDRCLQARGSEVAQDSSVE.

The first 15 residues, 1–15 (MKLLLLCLGLILVCA), serve as a signal peptide directing secretion. 2 N-linked (GlcNAc...) asparagine glycosylation sites follow: Asn-51 and Asn-66. Cys-81 and Cys-171 are oxidised to a cystine.

This sequence belongs to the calycin superfamily. Lipocalin family. As to expression, abundant in urine (at protein level).

The protein localises to the secreted. Functionally, may be a pheromone carrier. Acts as a kairomone, detected by the prey vomeronasal organ and inducing fear reactions in mice. In Felis catus (Cat), this protein is Allergen Fel d 4.